The primary structure comprises 801 residues: Na(+)/H(+) antiporter subunit A1 (801 aa).

Transmembrane regions (helical) follow at residues 1-21, 30-50, 79-99, 117-137, 166-186, 206-226, 228-250, 265-285, 300-320, 337-357, 373-393, 427-447, 472-492, 522-542, 591-611, 623-643, 646-666, 671-691, 707-727, and 764-784; these read MSLLHIAVLLPLIFALIIPFL, LGWFVLPVPIVLFIYFISLIS, LGLLFSLLITGIGSLVVLYSI, LFMGAMLGVVLSDNFIILYLF, LIITVLGGLSMLGGIILLSLA, PFFILVMILFMIGAFTKSAQV, FYIWLPDAMEAPTPVSAYLHSAT, IFAISEGWVWTITLVGLITLF, ILAFSTVSQLGMIMSMLGIGA, FVAAIFHLINHATFKGALFMI, LGGLLTIMPISFTLTVITTLS, LGILLPIIAIIGSIFTFVYSI, ILMLISPIILTSLVIVFGLFP, GITPAFLSTIGIYIIGILLLI, LVIILGILIALTFVTVISVPF, VFEGATVLFLLIASTFIIFAK, LFSIIMLSAVGYAISVLFIFF, LALTQFVVESISTALFLLCFY, LTNAVISIGVGLSVIILGLIG, and MDTLFESSVLGIAGLGVYTMI.

Belongs to the CPA3 antiporters (TC 2.A.63) subunit A family. As to quaternary structure, may form a heterooligomeric complex that consists of seven subunits: mnhA1, mnhB1, mnhC1, mnhD1, mnhE1, mnhF1 and mnhG1.

The protein localises to the cell membrane. Functionally, mnh complex is a Na(+)/H(+) antiporter involved in Na(+) excretion. The chain is Na(+)/H(+) antiporter subunit A1 (mnhA1) from Staphylococcus epidermidis (strain ATCC 35984 / DSM 28319 / BCRC 17069 / CCUG 31568 / BM 3577 / RP62A).